The chain runs to 102 residues: 10 kDa heat shock protein, mitochondrial (102 aa).

The protein belongs to the GroES chaperonin family. As to quaternary structure, homohexamer.

It is found in the mitochondrion matrix. Eukaryotic CPN10 homolog which is essential for mitochondrial protein biogenesis, together with CPN60. Binds to CPN60 in the presence of Mg-ATP and suppresses the ATPase activity of the latter. This chain is 10 kDa heat shock protein, mitochondrial, found in Schistosoma japonicum (Blood fluke).